Reading from the N-terminus, the 271-residue chain is Formamidopyrimidine-DNA glycosylase (271 aa).

The active-site Schiff-base intermediate with DNA is Pro-2. The active-site Proton donor is Glu-3. Lys-57 acts as the Proton donor; for beta-elimination activity in catalysis. DNA-binding residues include His-90, Arg-109, and Lys-151. The FPG-type zinc finger occupies 236–270 (HVYGRGSKSCTHCGNLLSEIRLGQRTTVFCGLCQT). The Proton donor; for delta-elimination activity role is filled by Arg-260.

Belongs to the FPG family. In terms of assembly, monomer. Zn(2+) serves as cofactor.

The catalysed reaction is Hydrolysis of DNA containing ring-opened 7-methylguanine residues, releasing 2,6-diamino-4-hydroxy-5-(N-methyl)formamidopyrimidine.. The enzyme catalyses 2'-deoxyribonucleotide-(2'-deoxyribose 5'-phosphate)-2'-deoxyribonucleotide-DNA = a 3'-end 2'-deoxyribonucleotide-(2,3-dehydro-2,3-deoxyribose 5'-phosphate)-DNA + a 5'-end 5'-phospho-2'-deoxyribonucleoside-DNA + H(+). Functionally, involved in base excision repair of DNA damaged by oxidation or by mutagenic agents. Acts as a DNA glycosylase that recognizes and removes damaged bases. Has a preference for oxidized purines, such as 7,8-dihydro-8-oxoguanine (8-oxoG). Has AP (apurinic/apyrimidinic) lyase activity and introduces nicks in the DNA strand. Cleaves the DNA backbone by beta-delta elimination to generate a single-strand break at the site of the removed base with both 3'- and 5'-phosphates. The chain is Formamidopyrimidine-DNA glycosylase from Shewanella denitrificans (strain OS217 / ATCC BAA-1090 / DSM 15013).